The primary structure comprises 312 residues: Olfactory receptor 2M7 (312 aa).

Over 1 to 25 (MAWENQTFNSDFLLLGIFNHSPTHT) the chain is Extracellular. An N-linked (GlcNAc...) asparagine glycan is attached at asparagine 5. Residues 26–49 (FLFFLVLAIFSVAFMGNSIMVLLI) traverse the membrane as a helical segment. Residues 50–57 (YLDTQLHT) are Cytoplasmic-facing. The helical transmembrane segment at 58 to 79 (PMYFLLSQLSLMDLMLICTTVP) threads the bilayer. At 80–100 (KMAFNYLSGSKSISMAGCATQ) the chain is on the extracellular side. Cysteine 97 and cysteine 189 are joined by a disulfide. The helical transmembrane segment at 101–120 (IFFYISLLGSECFLLAVMSY) threads the bilayer. Over 121 to 139 (DRYTAICHPLRYTNLMRPK) the chain is Cytoplasmic. A helical membrane pass occupies residues 140 to 158 (ICGLMTAFSWILGSTDGII). At 159–195 (DAVATFSFSYCGSREIAHFCCDFPSLLILSCNDTSIF) the chain is on the extracellular side. Residues 196–219 (EEVIFICCIVMLVFPVAIIITSYA) traverse the membrane as a helical segment. Over 220–236 (RVILAVIHMGSGEGRRK) the chain is Cytoplasmic. A helical membrane pass occupies residues 237 to 259 (AFTTCSSHLMVVGMYYGAGLFMC). At 260-272 (IQPTSHHSPMQDK) the chain is on the extracellular side. Residues 273–292 (MVSVFYTIVTPMLNPLIYSL) traverse the membrane as a helical segment. Over 293–311 (RNKEVTRALMKILGKGKSG) the chain is Cytoplasmic.

It belongs to the G-protein coupled receptor 1 family.

It is found in the cell membrane. Functionally, odorant receptor. The sequence is that of Olfactory receptor 2M7 (OR2M7) from Homo sapiens (Human).